The chain runs to 133 residues: Small ribosomal subunit protein uS19 (133 aa).

It belongs to the universal ribosomal protein uS19 family.

In terms of biological role, protein S19 forms a complex with S13 that binds strongly to the 16S ribosomal RNA. The chain is Small ribosomal subunit protein uS19 from Thermococcus sibiricus (strain DSM 12597 / MM 739).